A 308-amino-acid chain; its full sequence is UDP-N-acetylenolpyruvoylglucosamine reductase (308 aa).

One can recognise an FAD-binding PCMH-type domain in the interval 32 to 197 (QTGGKADYYL…LEAAFTLAPG (166 aa)). The active site involves Arg-176. The active-site Proton donor is the Ser-226. Glu-296 is a catalytic residue.

The protein belongs to the MurB family. The cofactor is FAD.

It localises to the cytoplasm. The enzyme catalyses UDP-N-acetyl-alpha-D-muramate + NADP(+) = UDP-N-acetyl-3-O-(1-carboxyvinyl)-alpha-D-glucosamine + NADPH + H(+). The protein operates within cell wall biogenesis; peptidoglycan biosynthesis. Cell wall formation. This chain is UDP-N-acetylenolpyruvoylglucosamine reductase, found in Staphylococcus saprophyticus subsp. saprophyticus (strain ATCC 15305 / DSM 20229 / NCIMB 8711 / NCTC 7292 / S-41).